The chain runs to 261 residues: uncharacterized protein (261 aa).

The signal sequence occupies residues 1–22 (MKYYGKCISYISILILTFFIGG). The N-palmitoyl cysteine moiety is linked to residue C23. C23 is lipidated: S-diacylglycerol cysteine.

This sequence belongs to the staphylococcal tandem lipoprotein family.

It localises to the cell membrane. This is an uncharacterized protein from Staphylococcus epidermidis (strain ATCC 12228 / FDA PCI 1200).